We begin with the raw amino-acid sequence, 350 residues long: 4-hydroxy-3-methylbut-2-enyl diphosphate reductase (350 aa).

Residue cysteine 36 participates in [4Fe-4S] cluster binding. Residues histidine 65 and histidine 101 each contribute to the (2E)-4-hydroxy-3-methylbut-2-enyl diphosphate site. Dimethylallyl diphosphate is bound by residues histidine 65 and histidine 101. The isopentenyl diphosphate site is built by histidine 65 and histidine 101. Residue cysteine 123 participates in [4Fe-4S] cluster binding. Residue histidine 151 participates in (2E)-4-hydroxy-3-methylbut-2-enyl diphosphate binding. Position 151 (histidine 151) interacts with dimethylallyl diphosphate. Histidine 151 contacts isopentenyl diphosphate. The active-site Proton donor is glutamate 153. A (2E)-4-hydroxy-3-methylbut-2-enyl diphosphate-binding site is contributed by threonine 192. Cysteine 222 lines the [4Fe-4S] cluster pocket. (2E)-4-hydroxy-3-methylbut-2-enyl diphosphate contacts are provided by serine 250, serine 251, asparagine 252, and serine 295. Serine 250, serine 251, asparagine 252, and serine 295 together coordinate dimethylallyl diphosphate. Isopentenyl diphosphate is bound by residues serine 250, serine 251, asparagine 252, and serine 295.

Belongs to the IspH family. It depends on [4Fe-4S] cluster as a cofactor.

The enzyme catalyses isopentenyl diphosphate + 2 oxidized [2Fe-2S]-[ferredoxin] + H2O = (2E)-4-hydroxy-3-methylbut-2-enyl diphosphate + 2 reduced [2Fe-2S]-[ferredoxin] + 2 H(+). The catalysed reaction is dimethylallyl diphosphate + 2 oxidized [2Fe-2S]-[ferredoxin] + H2O = (2E)-4-hydroxy-3-methylbut-2-enyl diphosphate + 2 reduced [2Fe-2S]-[ferredoxin] + 2 H(+). It functions in the pathway isoprenoid biosynthesis; dimethylallyl diphosphate biosynthesis; dimethylallyl diphosphate from (2E)-4-hydroxy-3-methylbutenyl diphosphate: step 1/1. The protein operates within isoprenoid biosynthesis; isopentenyl diphosphate biosynthesis via DXP pathway; isopentenyl diphosphate from 1-deoxy-D-xylulose 5-phosphate: step 6/6. In terms of biological role, catalyzes the conversion of 1-hydroxy-2-methyl-2-(E)-butenyl 4-diphosphate (HMBPP) into a mixture of isopentenyl diphosphate (IPP) and dimethylallyl diphosphate (DMAPP). Acts in the terminal step of the DOXP/MEP pathway for isoprenoid precursor biosynthesis. This is 4-hydroxy-3-methylbut-2-enyl diphosphate reductase from Rhizobium meliloti (strain 1021) (Ensifer meliloti).